The primary structure comprises 395 residues: Succinyl-diaminopimelate desuccinylase (395 aa).

Histidine 74 is a Zn(2+) binding site. Residue aspartate 76 is part of the active site. Aspartate 107 serves as a coordination point for Zn(2+). Glutamate 141 serves as the catalytic Proton acceptor. Residues glutamate 142, glutamate 170, and histidine 368 each coordinate Zn(2+).

The protein belongs to the peptidase M20A family. DapE subfamily. In terms of assembly, homodimer. The cofactor is Zn(2+). It depends on Co(2+) as a cofactor.

The catalysed reaction is N-succinyl-(2S,6S)-2,6-diaminopimelate + H2O = (2S,6S)-2,6-diaminopimelate + succinate. Its pathway is amino-acid biosynthesis; L-lysine biosynthesis via DAP pathway; LL-2,6-diaminopimelate from (S)-tetrahydrodipicolinate (succinylase route): step 3/3. Its function is as follows. Catalyzes the hydrolysis of N-succinyl-L,L-diaminopimelic acid (SDAP), forming succinate and LL-2,6-diaminopimelate (DAP), an intermediate involved in the bacterial biosynthesis of lysine and meso-diaminopimelic acid, an essential component of bacterial cell walls. This is Succinyl-diaminopimelate desuccinylase from Brucella melitensis biotype 2 (strain ATCC 23457).